The following is a 426-amino-acid chain: tRNA methyltransferase 10 homolog C (426 aa).

Residues 1–41 constitute a mitochondrion transit peptide; the sequence is MPVLLKMSVSITFLRPFARVLVPFTLHRKRRVLYSTIMQRY. S86 carries the post-translational modification Phosphoserine. The stretch at 138–166 forms a coiled coil; it reads LYIKEKMKKARQIKKEMKKAEKEEPKKDQ. The SAM-dependent MTase TRM10-type domain occupies 193–385; the sequence is MGWKGAQAMQ…KFVPSRKHAG (193 aa).

This sequence belongs to the class IV-like SAM-binding methyltransferase superfamily. TRM10 family. As to quaternary structure, component of mitochondrial ribonuclease P, a complex composed of TRMT10C/MRPP1, HSD17B10/MRPP2 and PRORP/MRPP3. Interacts with HSD17B10/MRPP2; forming the MRPP1-MRPP2 subcomplex of the mitochondrial ribonuclease P complex. Interacts with GRSF1.

The protein localises to the mitochondrion matrix. Its subcellular location is the mitochondrion nucleoid. The catalysed reaction is adenosine(9) in tRNA + S-adenosyl-L-methionine = N(1)-methyladenosine(9) in tRNA + S-adenosyl-L-homocysteine + H(+). It catalyses the reaction guanosine(9) in tRNA + S-adenosyl-L-methionine = N(1)-methylguanosine(9) in tRNA + S-adenosyl-L-homocysteine + H(+). The enzyme catalyses an adenosine in mRNA + S-adenosyl-L-methionine = an N(1)-methyladenosine in mRNA + S-adenosyl-L-homocysteine + H(+). Mitochondrial tRNA N(1)-methyltransferase involved in mitochondrial tRNA maturation. Component of mitochondrial ribonuclease P, a complex composed of TRMT10C/MRPP1, HSD17B10/MRPP2 and PRORP/MRPP3, which cleaves tRNA molecules in their 5'-ends. Together with HSD17B10/MRPP2, forms a subcomplex of the mitochondrial ribonuclease P, named MRPP1-MRPP2 subcomplex, which displays functions that are independent of the ribonuclease P activity. The MRPP1-MRPP2 subcomplex catalyzes the formation of N(1)-methylguanine and N(1)-methyladenine at position 9 (m1G9 and m1A9, respectively) in tRNAs; TRMT10C/MRPP1 acting as the catalytic N(1)-methyltransferase subunit. The MRPP1-MRPP2 subcomplex also acts as a tRNA maturation platform: following 5'-end cleavage by the mitochondrial ribonuclease P complex, the MRPP1-MRPP2 subcomplex enhances the efficiency of 3'-processing catalyzed by ELAC2, retains the tRNA product after ELAC2 processing and presents the nascent tRNA to the mitochondrial CCA tRNA nucleotidyltransferase TRNT1 enzyme. In addition to tRNA N(1)-methyltransferase activity, TRMT10C/MRPP1 also acts as a mRNA N(1)-methyltransferase by mediating methylation of adenosine residues at the N(1) position of MT-ND5 mRNA. Associates with mitochondrial DNA complexes at the nucleoids to initiate RNA processing and ribosome assembly. This Bos taurus (Bovine) protein is tRNA methyltransferase 10 homolog C.